Reading from the N-terminus, the 240-residue chain is Triosephosphate isomerase (240 aa).

9 to 11 (NWK) is a binding site for substrate. His94 functions as the Electrophile in the catalytic mechanism. Catalysis depends on Glu163, which acts as the Proton acceptor. Residues Gly169, Ser202, and 223–224 (GG) contribute to the substrate site.

The protein belongs to the triosephosphate isomerase family. As to quaternary structure, homodimer.

It is found in the cytoplasm. The catalysed reaction is D-glyceraldehyde 3-phosphate = dihydroxyacetone phosphate. It functions in the pathway carbohydrate biosynthesis; gluconeogenesis. The protein operates within carbohydrate degradation; glycolysis; D-glyceraldehyde 3-phosphate from glycerone phosphate: step 1/1. Its function is as follows. Involved in the gluconeogenesis. Catalyzes stereospecifically the conversion of dihydroxyacetone phosphate (DHAP) to D-glyceraldehyde-3-phosphate (G3P). The protein is Triosephosphate isomerase of Gloeobacter violaceus (strain ATCC 29082 / PCC 7421).